The sequence spans 264 residues: 3-methyl-2-oxobutanoate hydroxymethyltransferase (264 aa).

Positions 45 and 84 each coordinate Mg(2+). 3-methyl-2-oxobutanoate is bound by residues 45–46 (DS), Asp84, and Lys112. Glu114 serves as a coordination point for Mg(2+). The active-site Proton acceptor is the Glu181.

It belongs to the PanB family. In terms of assembly, homodecamer; pentamer of dimers. Requires Mg(2+) as cofactor.

It localises to the cytoplasm. The enzyme catalyses 3-methyl-2-oxobutanoate + (6R)-5,10-methylene-5,6,7,8-tetrahydrofolate + H2O = 2-dehydropantoate + (6S)-5,6,7,8-tetrahydrofolate. The protein operates within cofactor biosynthesis; (R)-pantothenate biosynthesis; (R)-pantoate from 3-methyl-2-oxobutanoate: step 1/2. Catalyzes the reversible reaction in which hydroxymethyl group from 5,10-methylenetetrahydrofolate is transferred onto alpha-ketoisovalerate to form ketopantoate. This is 3-methyl-2-oxobutanoate hydroxymethyltransferase from Shewanella loihica (strain ATCC BAA-1088 / PV-4).